The primary structure comprises 605 residues: Podocalyxin-like protein 2 (605 aa).

Positions 1-32 (MGRLLRAARLPPLLSPLLLLLVGGAFLGACVA) are cleaved as a signal peptide. Topologically, residues 33–500 (GSDEPGPEGL…ASQVRSDYGT (468 aa)) are extracellular. O-linked (Xyl...) (chondroitin sulfate) serine glycosylation occurs at S79. Residues Y97 and Y118 each carry the sulfotyrosine modification. Positions 129–134 (SIEDTS) are O-glycosylated at one site. Residues 129 to 347 (SIEDTSQAQE…PGDMELTPSS (219 aa)) are disordered. O-linked (GalNAc...) serine glycosylation is present at S144. Residues 162–189 (EEEEEEEEEEEREKEEVEKQEEEEEEEL) are compositionally biased toward acidic residues. N193 carries an N-linked (GlcNAc...) asparagine glycan. Residues 207-217 (SLTSSSQTPGA) show a composition bias toward polar residues. Composition is skewed to low complexity over residues 241–255 (PSLLLPSVTPTTVTP) and 288–298 (EATAGAAGLSG). N395 is a glycosylation site (N-linked (GlcNAc...) asparagine). A helical transmembrane segment spans residues 501 to 521 (LFVVLVVIGAICIIIIALGLL). Residues 522–605 (YNCWQRRLPK…SDVFEEDTHL (84 aa)) lie on the Cytoplasmic side of the membrane. Positions 554–605 (LDVASDSQSEMQEKHPSLNGGGALNGPGSWGALMGGKRDPEDSDVFEEDTHL) are disordered. Residue S570 is modified to Phosphoserine. Residues 572 to 582 (NGGGALNGPGS) show a composition bias toward gly residues. A compositionally biased stretch (acidic residues) spans 594 to 605 (EDSDVFEEDTHL). Phosphoserine is present on S596.

Belongs to the podocalyxin family. In terms of assembly, homodimer; disulfide-linked. Interacts with SELL, SELE and SELP. Post-translationally, O-glycosylated; contains chondroitin sulfate. Displays sialylated O-linked oligosaccharides. In terms of processing, sulfation is necessary for interaction with SELL. Sialylated O-linked oligosaccharides are necessary for interaction with SELL, SELE and SELP. In terms of tissue distribution, expressed in T-cells, B-cells and monocytes. Expression is higher on memory and germinal center cells than on naive B-cells (at protein level). Highly expressed in brain. Moderately expressed in pancreas, kidney and lymphoid node. Weakly expressed in liver. Detected in both endothelial cells and CD34+ bone marrow cells.

The protein resides in the membrane. Acts as a ligand for vascular selectins. Mediates rapid rolling of leukocytes over vascular surfaces through high affinity divalent cation-dependent interactions with E-, P- and L-selectins. The chain is Podocalyxin-like protein 2 (PODXL2) from Homo sapiens (Human).